Reading from the N-terminus, the 198-residue chain is V-type ATP synthase subunit E (198 aa).

It belongs to the V-ATPase E subunit family.

Produces ATP from ADP in the presence of a proton gradient across the membrane. This is V-type ATP synthase subunit E from Clostridium perfringens (strain SM101 / Type A).